Consider the following 117-residue polypeptide: uncharacterized protein (117 aa).

The signal sequence occupies residues 1-20; the sequence is MAAVHLYIISFTALMISSTS.

This is an uncharacterized protein from Saccharomyces cerevisiae (strain ATCC 204508 / S288c) (Baker's yeast).